A 425-amino-acid polypeptide reads, in one-letter code: Serine--tRNA ligase (425 aa).

226-228 contributes to the L-serine binding site; sequence TSE. ATP is bound by residues 257–259 and Val273; that span reads RRE. An L-serine-binding site is contributed by Glu280. Position 344-347 (344-347) interacts with ATP; that stretch reads ELTS. L-serine is bound at residue Thr382.

The protein belongs to the class-II aminoacyl-tRNA synthetase family. Type-1 seryl-tRNA synthetase subfamily. Homodimer. The tRNA molecule binds across the dimer.

It is found in the cytoplasm. The catalysed reaction is tRNA(Ser) + L-serine + ATP = L-seryl-tRNA(Ser) + AMP + diphosphate + H(+). The enzyme catalyses tRNA(Sec) + L-serine + ATP = L-seryl-tRNA(Sec) + AMP + diphosphate + H(+). Its pathway is aminoacyl-tRNA biosynthesis; selenocysteinyl-tRNA(Sec) biosynthesis; L-seryl-tRNA(Sec) from L-serine and tRNA(Sec): step 1/1. Functionally, catalyzes the attachment of serine to tRNA(Ser). Is also able to aminoacylate tRNA(Sec) with serine, to form the misacylated tRNA L-seryl-tRNA(Sec), which will be further converted into selenocysteinyl-tRNA(Sec). The sequence is that of Serine--tRNA ligase from Mycobacterium avium (strain 104).